The following is a 402-amino-acid chain: L-threonine ammonia-lyase (402 aa).

The residue at position 51 (lysine 51) is an N6-(pyridoxal phosphate)lysine. Pyridoxal 5'-phosphate contacts are provided by residues asparagine 78, 178 to 181 (GGGL), and serine 302. Residues 327–402 (KLKVELDDLP…GVGYLVDVLK (76 aa)) enclose the ACT domain.

It belongs to the serine/threonine dehydratase family. Pyridoxal 5'-phosphate is required as a cofactor.

The catalysed reaction is L-threonine = 2-oxobutanoate + NH4(+). It catalyses the reaction L-serine = pyruvate + NH4(+). Its pathway is amino-acid biosynthesis; L-isoleucine biosynthesis; 2-oxobutanoate from L-threonine: step 1/1. Its function is as follows. Catalyzes the conversion of threonine to 2-oxobutanoate and ammonia. Functions in the threonine-dependent pathway of isoleucine biosynthesis, which is the minor pathway for isoleucine biosynthesis in G.sulfurreducens. Also displays serine ammonia-lyase activity, yielding pyruvate from L-serine. The chain is L-threonine ammonia-lyase from Geobacter sulfurreducens (strain ATCC 51573 / DSM 12127 / PCA).